We begin with the raw amino-acid sequence, 217 residues long: Vesicle transport through interaction with t-SNAREs homolog 1A (217 aa).

The Cytoplasmic portion of the chain corresponds to 1 to 192 (MDVFERTEQN…TGIARRLATN (192 aa)). The stretch at 36–97 (AVREVENDID…AQLQSSNQTN (62 aa)) forms a coiled coil. Positions 90 to 109 (LQSSNQTNSNPWSNAPDDYQ) are disordered. One can recognise a t-SNARE coiled-coil homology domain in the interval 123–185 (SNMLDSTSDR…KSARKIMTGI (63 aa)). Residues 193-213 (KVILSIIILLLMGIIALIICL) traverse the membrane as a helical; Anchor for type IV membrane protein segment. The Vesicular segment spans residues 214–217 (KWLR).

Belongs to the VTI1 family. Component of the SNARE complex composed of syn7A, syn8A, vamp7A and vti1A.

It is found in the membrane. The protein localises to the cytoplasmic vesicle. Its subcellular location is the secretory vesicle membrane. It localises to the clathrin-coated vesicle membrane. The protein resides in the endosome membrane. It is found in the endoplasmic reticulum membrane. Functionally, V-SNARE that mediates vesicle transport pathways through interactions with t-SNAREs on the target membrane. These interactions are proposed to mediate aspects of the specificity of vesicle trafficking and to promote fusion of the lipid bilayers. This chain is Vesicle transport through interaction with t-SNAREs homolog 1A, found in Dictyostelium discoideum (Social amoeba).